Consider the following 216-residue polypeptide: Protein Syd (216 aa).

The protein belongs to the Syd family.

The protein resides in the cell inner membrane. Functionally, interacts with the SecY protein in vivo. May bind preferentially to an uncomplexed state of SecY, thus functioning either as a chelating agent for excess SecY in the cell or as a regulatory factor that negatively controls the translocase function. This Shewanella putrefaciens (strain CN-32 / ATCC BAA-453) protein is Protein Syd.